Here is a 143-residue protein sequence, read N- to C-terminus: UPF0306 protein plu4501 (143 aa).

This sequence belongs to the UPF0306 family.

This Photorhabdus laumondii subsp. laumondii (strain DSM 15139 / CIP 105565 / TT01) (Photorhabdus luminescens subsp. laumondii) protein is UPF0306 protein plu4501.